The chain runs to 103 residues: NADH-quinone oxidoreductase subunit K (103 aa).

The next 3 membrane-spanning stretches (helical) occupy residues 1 to 21 (MIVP…VGGV), 29 to 49 (ILLI…AFAG), and 62 to 82 (AVII…ALLV). Residues 84–103 (GRRGGGTDRADSYDRLGEES) are disordered. The segment covering 88 to 103 (GGTDRADSYDRLGEES) has biased composition (basic and acidic residues).

The protein belongs to the complex I subunit 4L family. In terms of assembly, NDH-1 is composed of 14 different subunits. Subunits NuoA, H, J, K, L, M, N constitute the membrane sector of the complex.

It localises to the cell inner membrane. The enzyme catalyses a quinone + NADH + 5 H(+)(in) = a quinol + NAD(+) + 4 H(+)(out). In terms of biological role, NDH-1 shuttles electrons from NADH, via FMN and iron-sulfur (Fe-S) centers, to quinones in the respiratory chain. The immediate electron acceptor for the enzyme in this species is believed to be ubiquinone. Couples the redox reaction to proton translocation (for every two electrons transferred, four hydrogen ions are translocated across the cytoplasmic membrane), and thus conserves the redox energy in a proton gradient. The polypeptide is NADH-quinone oxidoreductase subunit K (Solidesulfovibrio magneticus (strain ATCC 700980 / DSM 13731 / RS-1) (Desulfovibrio magneticus)).